Reading from the N-terminus, the 311-residue chain is tRNA-cytidine(32) 2-sulfurtransferase (311 aa).

Positions serine 47 to serine 52 match the PP-loop motif motif. [4Fe-4S] cluster-binding residues include cysteine 122, cysteine 125, and cysteine 213.

Belongs to the TtcA family. In terms of assembly, homodimer. Mg(2+) serves as cofactor. The cofactor is [4Fe-4S] cluster.

The protein resides in the cytoplasm. The enzyme catalyses cytidine(32) in tRNA + S-sulfanyl-L-cysteinyl-[cysteine desulfurase] + AH2 + ATP = 2-thiocytidine(32) in tRNA + L-cysteinyl-[cysteine desulfurase] + A + AMP + diphosphate + H(+). The protein operates within tRNA modification. In terms of biological role, catalyzes the ATP-dependent 2-thiolation of cytidine in position 32 of tRNA, to form 2-thiocytidine (s(2)C32). The sulfur atoms are provided by the cysteine/cysteine desulfurase (IscS) system. The chain is tRNA-cytidine(32) 2-sulfurtransferase from Salmonella choleraesuis (strain SC-B67).